A 225-amino-acid polypeptide reads, in one-letter code: 3-dehydroquinate dehydratase (225 aa).

Residues Ser-6, 30–32 (EWR), and Arg-62 each bind 3-dehydroquinate. His-118 acts as the Proton donor/acceptor in catalysis. Lys-143 acts as the Schiff-base intermediate with substrate in catalysis. Residues Arg-186, Thr-205, and Gln-209 each contribute to the 3-dehydroquinate site.

It belongs to the type-I 3-dehydroquinase family. In terms of assembly, homodimer.

It catalyses the reaction 3-dehydroquinate = 3-dehydroshikimate + H2O. The protein operates within metabolic intermediate biosynthesis; chorismate biosynthesis; chorismate from D-erythrose 4-phosphate and phosphoenolpyruvate: step 3/7. Involved in the third step of the chorismate pathway, which leads to the biosynthesis of aromatic amino acids. Catalyzes the cis-dehydration of 3-dehydroquinate (DHQ) and introduces the first double bond of the aromatic ring to yield 3-dehydroshikimate. The sequence is that of 3-dehydroquinate dehydratase from Streptococcus gordonii (strain Challis / ATCC 35105 / BCRC 15272 / CH1 / DL1 / V288).